The chain runs to 101 residues: NAD(P)H-quinone oxidoreductase subunit 4L, chloroplastic (101 aa).

Helical transmembrane passes span 2-22, 32-52, and 61-81; these read ILEH…YGLI, MCLE…SDFF, and IFCI…LAIV.

It belongs to the complex I subunit 4L family. As to quaternary structure, NDH is composed of at least 16 different subunits, 5 of which are encoded in the nucleus.

It localises to the plastid. The protein localises to the chloroplast thylakoid membrane. The catalysed reaction is a plastoquinone + NADH + (n+1) H(+)(in) = a plastoquinol + NAD(+) + n H(+)(out). It catalyses the reaction a plastoquinone + NADPH + (n+1) H(+)(in) = a plastoquinol + NADP(+) + n H(+)(out). Its function is as follows. NDH shuttles electrons from NAD(P)H:plastoquinone, via FMN and iron-sulfur (Fe-S) centers, to quinones in the photosynthetic chain and possibly in a chloroplast respiratory chain. The immediate electron acceptor for the enzyme in this species is believed to be plastoquinone. Couples the redox reaction to proton translocation, and thus conserves the redox energy in a proton gradient. In Draba nemorosa (Woodland whitlowgrass), this protein is NAD(P)H-quinone oxidoreductase subunit 4L, chloroplastic.